The sequence spans 90 residues: uncharacterized protein (90 aa).

It is found in the mitochondrion. This is an uncharacterized protein from Ascobolus immersus.